We begin with the raw amino-acid sequence, 377 residues long: tRNA-specific 2-thiouridylase MnmA (377 aa).

ATP is bound by residues 8–15 and Met-34; that span reads GMSGGVDS. Positions 94-96 are interaction with target base in tRNA; it reads NPD. The active-site Nucleophile is Cys-99. Cys-99 and Cys-201 are joined by a disulfide. Gly-123 is an ATP binding site. Residues 151 to 153 form an interaction with tRNA region; it reads KDQ. Cys-201 functions as the Cysteine persulfide intermediate in the catalytic mechanism. Residues 315–316 form an interaction with tRNA region; the sequence is RY.

This sequence belongs to the MnmA/TRMU family.

The protein resides in the cytoplasm. It catalyses the reaction S-sulfanyl-L-cysteinyl-[protein] + uridine(34) in tRNA + AH2 + ATP = 2-thiouridine(34) in tRNA + L-cysteinyl-[protein] + A + AMP + diphosphate + H(+). Its function is as follows. Catalyzes the 2-thiolation of uridine at the wobble position (U34) of tRNA, leading to the formation of s(2)U34. The protein is tRNA-specific 2-thiouridylase MnmA of Acinetobacter baylyi (strain ATCC 33305 / BD413 / ADP1).